Consider the following 240-residue polypeptide: Seed lectin (240 aa).

Asn111 carries an N-linked (GlcNAc...) asparagine glycan. Mn(2+) is bound by residues Glu123 and Asp125. Asp125, Asn129, and Asp132 together coordinate Ca(2+). Positions 132 and 137 each coordinate Mn(2+). Asn183 carries N-linked (GlcNAc...) asparagine glycosylation.

Belongs to the leguminous lectin family. In terms of assembly, homotetramer. Post-translationally, partially N-glycosylated at Asn-111 and Asn-183 with the heptasaccharide [(beta-xylosyl-1,2)(alpha-mannosyl-1,6)(alpha-mannosyl-1,3)]beta-manosyl-1,4-GlcNAC-beta-1,4-GlcNAc-beta-1,4 [alpha-fucosyl-1,3]GlcNAc. A small proportion of alpha chains are proteolytically cleaved at 114-115 into gamma and beta chains. This is probably dependent on the deglycosylation of Asn-111. Seed.

In terms of biological role, lectin that binds galactose. The chain is Seed lectin from Vatairea macrocarpa.